The primary structure comprises 201 residues: Transmembrane 4 L6 family member 18 (201 aa).

The Cytoplasmic portion of the chain corresponds to 1–9; sequence MGSRKCGGC. The helical transmembrane segment at 10–30 threads the bilayer; it reads LSCLLIPLALWSIIVNILLYF. Over 31–49 the chain is Extracellular; the sequence is PNGQTSYASSNKLTNYVWY. Residues 50–70 form a helical membrane-spanning segment; sequence FEGICFSGIMMLIVTTVLLVL. The Cytoplasmic portion of the chain corresponds to 71-93; that stretch reads ENNNNYKCCQSENCSKKYVTLLS. A helical membrane pass occupies residues 94–114; that stretch reads IIFSSLGIAFSGYCLVISALG. Over 115-157 the chain is Extracellular; the sequence is LVQGPYCRTLDGWEYAFEGTAGRFLTDSSIWIQCLEPAHVVEW. Residues 158 to 178 form a helical membrane-spanning segment; that stretch reads NIILFSILITLSGLQVIICLI. Over 179-201 the chain is Cytoplasmic; the sequence is RVVMQLSKILCGSYSVIFQPGII.

This sequence belongs to the L6 tetraspanin family.

It localises to the membrane. The sequence is that of Transmembrane 4 L6 family member 18 (TM4SF18) from Homo sapiens (Human).